Consider the following 477-residue polypeptide: Bifunctional protein HldE (477 aa).

Positions 1–318 are ribokinase; that stretch reads MKVTLPEFER…ENAVRGRADT (318 aa). Lysine 179 carries the post-translational modification N6-acetyllysine. 195 to 198 provides a ligand contact to ATP; that stretch reads NLSE. Aspartate 264 is an active-site residue. The cytidylyltransferase stretch occupies residues 344–477; it reads MTNGVFDILH…IKKIQQDKKG (134 aa).

In the N-terminal section; belongs to the carbohydrate kinase PfkB family. The protein in the C-terminal section; belongs to the cytidylyltransferase family. In terms of assembly, homodimer.

It carries out the reaction D-glycero-beta-D-manno-heptose 7-phosphate + ATP = D-glycero-beta-D-manno-heptose 1,7-bisphosphate + ADP + H(+). The catalysed reaction is D-glycero-beta-D-manno-heptose 1-phosphate + ATP + H(+) = ADP-D-glycero-beta-D-manno-heptose + diphosphate. It participates in nucleotide-sugar biosynthesis; ADP-L-glycero-beta-D-manno-heptose biosynthesis; ADP-L-glycero-beta-D-manno-heptose from D-glycero-beta-D-manno-heptose 7-phosphate: step 1/4. The protein operates within nucleotide-sugar biosynthesis; ADP-L-glycero-beta-D-manno-heptose biosynthesis; ADP-L-glycero-beta-D-manno-heptose from D-glycero-beta-D-manno-heptose 7-phosphate: step 3/4. Functionally, catalyzes the phosphorylation of D-glycero-D-manno-heptose 7-phosphate at the C-1 position to selectively form D-glycero-beta-D-manno-heptose-1,7-bisphosphate. Its function is as follows. Catalyzes the ADP transfer from ATP to D-glycero-beta-D-manno-heptose 1-phosphate, yielding ADP-D-glycero-beta-D-manno-heptose. The polypeptide is Bifunctional protein HldE (Escherichia coli O17:K52:H18 (strain UMN026 / ExPEC)).